The sequence spans 313 residues: Homoserine kinase (313 aa).

92–102 (PPGRGLGSSGA) is a binding site for ATP.

This sequence belongs to the GHMP kinase family. Homoserine kinase subfamily.

The protein resides in the cytoplasm. The catalysed reaction is L-homoserine + ATP = O-phospho-L-homoserine + ADP + H(+). It participates in amino-acid biosynthesis; L-threonine biosynthesis; L-threonine from L-aspartate: step 4/5. Its function is as follows. Catalyzes the ATP-dependent phosphorylation of L-homoserine to L-homoserine phosphate. The protein is Homoserine kinase of Aeropyrum pernix (strain ATCC 700893 / DSM 11879 / JCM 9820 / NBRC 100138 / K1).